Here is a 161-residue protein sequence, read N- to C-terminus: Alpha-crystallin A chain (161 aa).

M1 carries the post-translational modification N-acetylmethionine. The interval 1–53 is required for complex formation with BFSP1 and BFSP2; it reads MDVTIQHPWFKRALGPFYHNRLFDQFFGEGLFEYDLLPFQSLFRTVLDSGISE. 2 positions are modified to deamidated glutamine; partial: Q6 and Q40. The 110-residue stretch at 41–150 folds into the sHSP domain; it reads SLFRTVLDSG…SHSERAIPVS (110 aa). Residue K87 is modified to N6-acetyllysine. H88 is a binding site for Zn(2+). Deamidated asparagine; partial is present on N89. Positions 90 and 95 each coordinate Zn(2+). S110 is subject to Phosphoserine. N111 bears the Deamidated asparagine; partial mark. C119 and C130 are disulfide-bonded. The residue at position 135 (Q135) is a Deamidated glutamine; partial. Residues 135–161 form a disordered region; the sequence is QSGMDASHSERAIPVSREEKASSAPNS. Residues 141–155 show a composition bias toward basic and acidic residues; it reads SHSERAIPVSREEKA. H142 is a Zn(2+) binding site. S150 carries an O-linked (GlcNAc) serine glycan.

It belongs to the small heat shock protein (HSP20) family. As to quaternary structure, heteromer composed of three CRYAA and one CRYAB subunits. Inter-subunit bridging via zinc ions enhances stability, which is crucial as there is no protein turn over in the lens. Can also form homodimers and homotetramers (dimers of dimers) which serve as the building blocks of homooligomers. Within homooligomers, the zinc-binding motif is created from residues of 3 different molecules. His-88 and Glu-90 from one molecule are ligands of the zinc ion, and His-95 and His-142 residues from additional molecules complete the site with tetrahedral coordination geometry. Part of a complex required for lens intermediate filament formation composed of BFSP1, BFSP2 and CRYAA. Undergoes age-dependent proteolytical cleavage at the C-terminus.

It localises to the cytoplasm. The protein localises to the nucleus. Functionally, contributes to the transparency and refractive index of the lens. In its oxidized form (absence of intramolecular disulfide bond), acts as a chaperone, preventing aggregation of various proteins under a wide range of stress conditions. Required for the correct formation of lens intermediate filaments as part of a complex composed of BFSP1, BFSP2 and CRYAA. This Trichechus inunguis (Amazon manatee) protein is Alpha-crystallin A chain (CRYAA).